Here is a 44-residue protein sequence, read N- to C-terminus: Photosystem I reaction center subunit IX (44 aa).

A helical transmembrane segment spans residues 7 to 27 (YLSAAPVLSTIWFGALAGLLI).

Belongs to the PsaJ family.

The protein resides in the plastid. It localises to the chloroplast thylakoid membrane. May help in the organization of the PsaE and PsaF subunits. This is Photosystem I reaction center subunit IX from Pelargonium hortorum (Common geranium).